Reading from the N-terminus, the 165-residue chain is Large ribosomal subunit protein uL10 (165 aa).

It belongs to the universal ribosomal protein uL10 family. As to quaternary structure, part of the ribosomal stalk of the 50S ribosomal subunit. The N-terminus interacts with L11 and the large rRNA to form the base of the stalk. The C-terminus forms an elongated spine to which L12 dimers bind in a sequential fashion forming a multimeric L10(L12)X complex.

Forms part of the ribosomal stalk, playing a central role in the interaction of the ribosome with GTP-bound translation factors. In Burkholderia multivorans (strain ATCC 17616 / 249), this protein is Large ribosomal subunit protein uL10.